The following is a 435-amino-acid chain: GTPase Der (435 aa).

EngA-type G domains follow at residues 4–167 (PVVA…PAEK) and 175–350 (ISFS…DNQN). Residues 10-17 (GQPNVGKS), 57-61 (DTGGI), 119-122 (NKAD), 181-188 (GRPNVGKS), 228-232 (DTAGI), and 293-296 (NKWD) each bind GTP. The KH-like domain maps to 351–435 (QRIQSSVLND…PIKILPRKRK (85 aa)).

The protein belongs to the TRAFAC class TrmE-Era-EngA-EngB-Septin-like GTPase superfamily. EngA (Der) GTPase family. Associates with the 50S ribosomal subunit.

Its function is as follows. GTPase that plays an essential role in the late steps of ribosome biogenesis. This Lactobacillus helveticus (strain DPC 4571) protein is GTPase Der.